A 194-amino-acid chain; its full sequence is Large ribosomal subunit protein bL27c (194 aa).

A chloroplast-targeting transit peptide spans 1 to 57; it reads MAVTTSMSFNLMASFRGMSLSSSSSSSFFKGEFGPSSLRLPNKSPLSVSPFPLTIES. Residues 57–76 are disordered; it reads SAHKKGAGSTKNGRDSKGQR.

Component of the chloroplast large ribosomal subunit (LSU). Mature 70S chloroplast ribosomes of higher plants consist of a small (30S) and a large (50S) subunit. The 30S small subunit contains 1 molecule of ribosomal RNA (16S rRNA) and 24 different proteins. The 50S large subunit contains 3 rRNA molecules (23S, 5S and 4.5S rRNA) and 33 different proteins.

The protein localises to the plastid. It is found in the chloroplast. Its function is as follows. Component of the chloroplast ribosome (chloro-ribosome), a dedicated translation machinery responsible for the synthesis of chloroplast genome-encoded proteins, including proteins of the transcription and translation machinery and components of the photosynthetic apparatus. The sequence is that of Large ribosomal subunit protein bL27c (RPL27) from Spinacia oleracea (Spinach).